The chain runs to 288 residues: Type II restriction enzyme DpnII (288 aa).

The protein belongs to the DpnII type II restriction endonuclease family. Homodimer.

The enzyme catalyses Endonucleolytic cleavage of DNA to give specific double-stranded fragments with terminal 5'-phosphates.. A P subtype restriction enzyme that recognizes the double-stranded unmethylated sequence 5'-GATC-3' and cleaves before G-1. The polypeptide is Type II restriction enzyme DpnII (Streptococcus pneumoniae).